The sequence spans 131 residues: Putative protein PTGES3L (131 aa).

The CS domain occupies 3–91 (RQPARTLWYD…KEKVAWPRLT (89 aa)).

The protein belongs to the p23/wos2 family.

The polypeptide is Putative protein PTGES3L (Ptges3l) (Mus musculus (Mouse)).